Here is a 463-residue protein sequence, read N- to C-terminus: L-seryl-tRNA(Sec) selenium transferase (463 aa).

The residue at position 295 (lysine 295) is an N6-(pyridoxal phosphate)lysine.

The protein belongs to the SelA family. In terms of assembly, homodecamer; pentamer of dimers. Binds only one seryl-tRNA(Sec) per dimer. Requires pyridoxal 5'-phosphate as cofactor.

The protein resides in the cytoplasm. The enzyme catalyses L-seryl-tRNA(Sec) + selenophosphate + H(+) = L-selenocysteinyl-tRNA(Sec) + phosphate. The protein operates within aminoacyl-tRNA biosynthesis; selenocysteinyl-tRNA(Sec) biosynthesis; selenocysteinyl-tRNA(Sec) from L-seryl-tRNA(Sec) (bacterial route): step 1/1. Converts seryl-tRNA(Sec) to selenocysteinyl-tRNA(Sec) required for selenoprotein biosynthesis. The sequence is that of L-seryl-tRNA(Sec) selenium transferase from Salmonella enteritidis PT4 (strain P125109).